The following is an 834-amino-acid chain: Dual specificity calcium/calmodulin-dependent 3',5'-cyclic nucleotide phosphodiesterase 1 (834 aa).

The segment at 152 to 338 is disordered; the sequence is HSHGRDDQQQ…DELSEVQPDA (187 aa). The segment covering 207–222 has biased composition (low complexity); that stretch reads THSGPTGPPSNTSSET. Positions 236-252 are enriched in basic and acidic residues; it reads TVRESVMEESPSKDPGD. Positions 260-301 are enriched in low complexity; it reads STSTLTSQTTTSSSATAEPSAKAAESQAGSAGSSGSCSNPAA. Residues 313 to 322 are compositionally biased toward polar residues; that stretch reads WARSMSTNKT. Residues 364 to 387 form a calmodulin-binding region; that stretch reads EKPKFRSVAHAIRAGIFVDRMYRR. In terms of domain architecture, PDEase spans 392–786; sequence ALTAFPPDVV…RIWKEQAVKD (395 aa). The Proton donor role is filled by His-469. Positions 473, 509, 510, and 617 each coordinate Zn(2+). Asp-510 is a binding site for Mg(2+). 2 disordered regions span residues 720 to 744 and 797 to 834; these read IVIP…AKTT and EEAA…GAAA. Residues 732-741 are compositionally biased toward basic and acidic residues; sequence DKPRDHRTEA. Positions 823–834 are enriched in low complexity; the sequence is EPAAEPADGAAA.

The protein belongs to the cyclic nucleotide phosphodiesterase family. PDE1 subfamily. It depends on Zn(2+) as a cofactor. Mg(2+) serves as cofactor. Expressed in the head (at protein level). Expressed in Malpighian tubules. Expressed in neurons in the brain and ventral ganglia with male flies having higher levels of expression in the abdominal ganglia compared to female flies.

The catalysed reaction is a nucleoside 3',5'-cyclic phosphate + H2O = a nucleoside 5'-phosphate + H(+). It carries out the reaction 3',5'-cyclic GMP + H2O = GMP + H(+). It catalyses the reaction 3',5'-cyclic AMP + H2O = AMP + H(+). Its activity is regulated as follows. Type I PDE are activated by the binding of calmodulin in the presence of Ca(2+). Inhibited by zaprinast and sildenafil. Cyclic nucleotide phosphodiesterase with a dual specificity for the second messengers cAMP and cGMP, which are key regulators of many important physiological processes. Required for male fertility and male mating behavior. This is Dual specificity calcium/calmodulin-dependent 3',5'-cyclic nucleotide phosphodiesterase 1 from Drosophila melanogaster (Fruit fly).